A 165-amino-acid polypeptide reads, in one-letter code: Phosphopantetheine adenylyltransferase (165 aa).

Thr10 contributes to the substrate binding site. ATP contacts are provided by residues 10–11 (TF) and His18. Substrate-binding residues include Lys42, Leu74, and Arg88. ATP contacts are provided by residues 89 to 91 (GLR), Glu99, and 124 to 130 (NAFISSS).

The protein belongs to the bacterial CoaD family. Homohexamer. Requires Mg(2+) as cofactor.

The protein resides in the cytoplasm. The enzyme catalyses (R)-4'-phosphopantetheine + ATP + H(+) = 3'-dephospho-CoA + diphosphate. It functions in the pathway cofactor biosynthesis; coenzyme A biosynthesis; CoA from (R)-pantothenate: step 4/5. Functionally, reversibly transfers an adenylyl group from ATP to 4'-phosphopantetheine, yielding dephospho-CoA (dPCoA) and pyrophosphate. The sequence is that of Phosphopantetheine adenylyltransferase from Helicobacter hepaticus (strain ATCC 51449 / 3B1).